Here is a 436-residue protein sequence, read N- to C-terminus: Elongation factor 1-gamma-A (436 aa).

One can recognise a GST N-terminal domain in the interval 2–87; it reads AGGTLYTYPD…YVGNDELRGT (86 aa). The GST C-terminal domain occupies 88–221; the sequence is TRLHQAQVIQ…KMAQFDAKKF (134 aa). Basic and acidic residues-rich tracts occupy residues 221 to 249 and 265 to 278; these read FAEM…EKKK and SEKA…SKDP. Residues 221–278 form a disordered region; the sequence is FAEMQPKKETPKKEKPAKEPKKEKEEKKKAAPTPAPAPEDDLDESEKALAAEPKSKDP. The EF-1-gamma C-terminal domain occupies 275-436; that stretch reads SKDPYAHLPK…KPFNQGKIFK (162 aa).

EF-1 is composed of four subunits: alpha, beta, delta, and gamma. Phosphorylated by CDK1. Post-translationally, the N-terminus is blocked.

Probably plays a role in anchoring the complex to other cellular components. In Xenopus laevis (African clawed frog), this protein is Elongation factor 1-gamma-A (eef1g-a).